Reading from the N-terminus, the 152-residue chain is Acyl carrier protein, mitochondrial (152 aa).

The region spanning 73-148 is the Carrier domain; it reads KLINERVLLV…DIIKYVADKE (76 aa). Ser-108 carries the O-(pantetheine 4'-phosphoryl)serine modification.

The protein belongs to the acyl carrier protein (ACP) family. Complex I is composed of about 45 different subunits.

It is found in the mitochondrion. In terms of biological role, carrier of the growing fatty acid chain in fatty acid biosynthesis. Accessory and non-catalytic subunit of the mitochondrial membrane respiratory chain NADH dehydrogenase (Complex I), which functions in the transfer of electrons from NADH to the respiratory chain. The sequence is that of Acyl carrier protein, mitochondrial from Drosophila melanogaster (Fruit fly).